The chain runs to 305 residues: Dihydroorotate dehydrogenase B (NAD(+)), catalytic subunit (305 aa).

FMN contacts are provided by residues Ser23 and 47 to 48 (KG). Residues Lys47 and 71 to 75 (NAIGL) each bind substrate. FMN is bound by residues Asn101 and Asn129. Asn129 contributes to the substrate binding site. Cys132 acts as the Nucleophile in catalysis. FMN-binding residues include Lys167 and Ile193. 194 to 195 (NT) provides a ligand contact to substrate. FMN contacts are provided by residues Gly219, 245 to 246 (GG), and 267 to 268 (GT).

Belongs to the dihydroorotate dehydrogenase family. Type 1 subfamily. As to quaternary structure, heterotetramer of 2 PyrK and 2 PyrD type B subunits. FMN is required as a cofactor.

It localises to the cytoplasm. The enzyme catalyses (S)-dihydroorotate + NAD(+) = orotate + NADH + H(+). The protein operates within pyrimidine metabolism; UMP biosynthesis via de novo pathway; orotate from (S)-dihydroorotate (NAD(+) route): step 1/1. Functionally, catalyzes the conversion of dihydroorotate to orotate with NAD(+) as electron acceptor. In Geobacter sulfurreducens (strain ATCC 51573 / DSM 12127 / PCA), this protein is Dihydroorotate dehydrogenase B (NAD(+)), catalytic subunit (pyrD).